The following is a 49-amino-acid chain: Isoflavone reductase homolog 2 (49 aa).

Position 5–11 (5–11 (GGTGYIG)) interacts with NADP(+).

This sequence belongs to the NmrA-type oxidoreductase family. Isoflavone reductase subfamily.

The protein localises to the cytoplasm. This chain is Isoflavone reductase homolog 2, found in Pseudotsuga menziesii (Douglas-fir).